The chain runs to 279 residues: MNSTMSDEPDALSVVNQLRDLAADPLNRRAIVQDQGCLPGLILFLDHPSPPVVHSALLALRYLAECRANREKMKGELGMMLSLQNVIQKTTTPGETKLLASEVYDILQSSNMSDMDNVNEMNYRRRKAQFFLGSTNKRAKTVVLHIDGLDDSSRRNLCEEALLKIKGVISFTFQMAVQRCVVRIRSDLKAEALATAIASTKVMKAQQVVKSESGEEMLVPFQDTPVEVEQNTDLPEYLPEDESPSKEQDKAVSRVGSHPEGAASWLSTAANFLSRSFYW.

Residues 36–78 form an ARM repeat; that stretch reads GCLPGLILFLDHPSPPVVHSALLALRYLAECRANREKMKGELG. A disordered region spans residues 236-257; sequence EYLPEDESPSKEQDKAVSRVGS. The span at 243-252 shows a compositional bias: basic and acidic residues; sequence SPSKEQDKAV.

Interacts with mitochondrial contact site and cristae organizing system (MICOS) complex components IMMT/MIC60 and MICOS10/MIC10. Interacts with mitochondrial outer membrane sorting assembly machinery (SAM) complex components SAMM50 and MTX1.

It localises to the cytoplasm. Its subcellular location is the mitochondrion. It is found in the mitochondrion outer membrane. In association with mitochondrial contact site and cristae organizing system (MICOS) complex components and mitochondrial outer membrane sorting assembly machinery (SAM) complex components may regulate mitochondrial dynamics playing a role in determining mitochondrial length, distribution and motility. The chain is Armadillo repeat-containing protein 1 (ARMC1) from Gallus gallus (Chicken).